A 311-amino-acid chain; its full sequence is tRNA-cytidine(32) 2-sulfurtransferase (311 aa).

Residues 47 to 52 (SGGKDS) carry the PP-loop motif motif. Residues Cys122, Cys125, and Cys213 each coordinate [4Fe-4S] cluster.

Belongs to the TtcA family. As to quaternary structure, homodimer. Requires Mg(2+) as cofactor. [4Fe-4S] cluster serves as cofactor.

Its subcellular location is the cytoplasm. It catalyses the reaction cytidine(32) in tRNA + S-sulfanyl-L-cysteinyl-[cysteine desulfurase] + AH2 + ATP = 2-thiocytidine(32) in tRNA + L-cysteinyl-[cysteine desulfurase] + A + AMP + diphosphate + H(+). Its pathway is tRNA modification. Its function is as follows. Catalyzes the ATP-dependent 2-thiolation of cytidine in position 32 of tRNA, to form 2-thiocytidine (s(2)C32). The sulfur atoms are provided by the cysteine/cysteine desulfurase (IscS) system. This chain is tRNA-cytidine(32) 2-sulfurtransferase, found in Escherichia coli O1:K1 / APEC.